Consider the following 255-residue polypeptide: MQPLLLLLAFLLPTGAEAGEIIGGRESRPHSRPYMAYLQIQSPAGQSRCGGFLVREDFVLTAAHCWGSNINVTLGAHNIQRRENTQQHITARRAIRHPQYNQRTIQNDIMLLQLSRRVRRNRNVNPVALPRAQEGLRPGTLCTVAGWGRVSMRRGTDTLREVQLRVQRDRQCLRIFGSYDPRRQICVGDRRERKAAFKGDSGGPLLCNNVAHGIVSYGKSSGVPPEVFTRVSSFLPWIRTTMRSFKLLDQMETPL.

The signal sequence occupies residues M1–A18. A propeptide spans G19–E20 (activation peptide). The tract at residues I21 to R25 is important for antimicrobial activity. In terms of domain architecture, Peptidase S1 spans I21–R243. An intrachain disulfide couples C49 to C65. The Charge relay system role is filled by H64. A glycan (N-linked (GlcNAc...) (complex) asparagine; alternate) is linked at N71. A glycan (N-linked (GlcNAc...) (paucimannose) asparagine; alternate) is linked at N71. Positions H97–L111 are important for antimicrobial activity. Residue D108 is the Charge relay system of the active site. Cystine bridges form between C142-C207 and C172-C186. The Charge relay system role is filled by S201. Positions F245–L255 are excised as a propeptide.

Belongs to the peptidase S1 family. As to quaternary structure, (Microbial infection) Interacts with CASP4; the interaction is promoted by the Td92 surface protein of the periodontal pathogen T.denticola and leads to CASP4 activation. (Microbial infection) Interacts with M.tuberculosis protein Rv3364c. In terms of assembly, (Microbial infection) Interacts with S.aureus EapH1; EapH1 acts as a reversible inhibitor of CATG activity. In terms of processing, two C-terminal truncation variants have been identified, one which ends at Arg-243 and one which ends at Ser-244. Expressed in neutrophils (at protein level). Expressed in B cells.

Its subcellular location is the cell membrane. It localises to the cytoplasmic granule. It is found in the secreted. The protein resides in the cytoplasm. The protein localises to the cytosol. Its subcellular location is the lysosome. It localises to the nucleus. It catalyses the reaction Specificity similar to chymotrypsin C.. Inhibited by soybean trypsin inhibitor, benzamidine, the synthetic peptide R13K, Z-Gly-Leu-Phe-CH2Cl, phenylmethylsulfonyl fluoride, 3,4-dichloroisocoumarin, DFP, SBTI and alpha-1-antitrypsin. Inhibited by LPS from P.aeruginosa but not by LPS from S.minnesota. Not inhibited by elastinal, CMK, TLCK, ETDA or leupeptin. Its activity is regulated as follows. (Microbial infection) Inhibited reversibly by S.aureus EapH1. With respect to regulation, (Microbial infection) Activity is induced by the Td92 surface protein of the periodontal pathogen T.denticola. Serine protease with trypsin- and chymotrypsin-like specificity. Also displays antibacterial activity against Gram-negative and Gram-positive bacteria independent of its protease activity. Prefers Phe and Tyr residues in the P1 position of substrates but also cleaves efficiently after Trp and Leu. Shows a preference for negatively charged amino acids in the P2' position and for aliphatic amino acids both upstream and downstream of the cleavage site. Required for recruitment and activation of platelets which is mediated by the F2RL3/PAR4 platelet receptor. Binds reversibly to and stimulates B cells and CD4(+) and CD8(+) T cells. Also binds reversibly to natural killer (NK) cells and enhances NK cell cytotoxicity through its protease activity. Cleaves complement C3. Cleaves vimentin. Cleaves thrombin receptor F2R/PAR1 and acts as either an agonist or an inhibitor, depending on the F2R cleavage site. Cleavage of F2R at '41-Arg-|-Ser-42' results in receptor activation while cleavage at '55-Phe-|-Trp-56' results in inhibition of receptor activation. Cleaves the synovial mucin-type protein PRG4/lubricin. Cleaves and activates IL36G which promotes expression of chemokines CXCL1 and CXLC8 in keratinocytes. Cleaves IL33 into mature forms which have greater activity than the unprocessed form. Cleaves coagulation factor F8 to produce a partially activated form. Also cleaves and activates coagulation factor F10. Cleaves leukocyte cell surface protein SPN/CD43 to release its extracellular domain and trigger its intramembrane proteolysis by gamma-secretase, releasing the CD43 cytoplasmic tail chain (CD43-ct) which translocates to the nucleus. Cleaves CCL5/RANTES to produce RANTES(4-68) lacking the N-terminal three amino acids which exhibits reduced chemotactic and antiviral activities. During apoptosis, cleaves SMARCA2/BRM to produce a 160 kDa cleavage product which localizes to the cytosol. Cleaves myelin basic protein MBP in B cell lysosomes at '224-Phe-|-Lys-225' and '248-Phe-|-Ser-249', degrading the major immunogenic MBP epitope and preventing the activation of MBP-specific autoreactive T cells. Cleaves annexin ANXA1 and antimicrobial peptide CAMP to produce peptides which act on neutrophil N-formyl peptide receptors to enhance the release of CXCL2. Acts as a ligand for the N-formyl peptide receptor FPR1, enhancing phagocyte chemotaxis. Has antibacterial activity against the Gram-negative bacteria N.gonorrhoeae and P.aeruginosa. Likely to act against N.gonorrhoeae by interacting with N.gonorrhoeae penA/PBP2. Exhibits potent antimicrobial activity against the Gram-positive bacterium L.monocytogenes. Has antibacterial activity against the Gram-positive bacterium S.aureus and degrades S.aureus biofilms, allowing polymorphonuclear leukocytes to penetrate the biofilm and phagocytose bacteria. Has antibacterial activity against M.tuberculosis. Mediates CASP4 activation induced by the Td92 surface protein of the periodontal pathogen T.denticola, causing production and secretion of IL1A and leading to pyroptosis of gingival fibroblasts. Induces platelet aggregation which is strongly potentiated in the presence of ELANE. This Homo sapiens (Human) protein is Cathepsin G (CTSG).